The sequence spans 410 residues: Argininosuccinate synthase (410 aa).

Position 10–18 (10–18) interacts with ATP; sequence AYSGGLDTS. Positions 88 and 93 each coordinate L-citrulline. Gly-118 is a binding site for ATP. L-aspartate contacts are provided by Thr-120, Asn-124, and Asp-125. Asn-124 is an L-citrulline binding site. L-citrulline is bound by residues Arg-128, Ser-177, Ser-186, Glu-262, and Tyr-274.

This sequence belongs to the argininosuccinate synthase family. Type 1 subfamily. Homotetramer.

It is found in the cytoplasm. It catalyses the reaction L-citrulline + L-aspartate + ATP = 2-(N(omega)-L-arginino)succinate + AMP + diphosphate + H(+). Its pathway is amino-acid biosynthesis; L-arginine biosynthesis; L-arginine from L-ornithine and carbamoyl phosphate: step 2/3. This chain is Argininosuccinate synthase, found in Thermoanaerobacter sp. (strain X514).